A 313-amino-acid polypeptide reads, in one-letter code: 3'-5' exoribonuclease YhaM (313 aa).

Positions 22–90 (SSVKGTASNG…QLKIRQIRQA (69 aa)) form a DNA-binding region, OB. Residues 163–279 (HVVSMLRLAK…LHQIDLMDAS (117 aa)) enclose the HD domain.

It belongs to the YhaM family.

In terms of biological role, shows a 3'-5' exoribonuclease activity. The sequence is that of 3'-5' exoribonuclease YhaM from Listeria monocytogenes serovar 1/2a (strain ATCC BAA-679 / EGD-e).